The primary structure comprises 162 residues: Large ribosomal subunit protein uL11 (162 aa).

A disordered region spans residues 1 to 27 (MAGTIEVLVPGGEANPGPPLGPELGPT).

This sequence belongs to the universal ribosomal protein uL11 family. In terms of assembly, part of the 50S ribosomal subunit. Forms part of the ribosomal stalk which helps the ribosome interact with GTP-bound translation factors. Forms a heptameric L10(L12)2(L12)2(L12)2 complex, where L10 forms an elongated spine to which 3 L12 dimers bind in a sequential fashion.

In terms of biological role, forms part of the ribosomal stalk which helps the ribosome interact with GTP-bound translation factors. This Haloarcula marismortui (strain ATCC 43049 / DSM 3752 / JCM 8966 / VKM B-1809) (Halobacterium marismortui) protein is Large ribosomal subunit protein uL11.